The sequence spans 761 residues: Protein PHTF1 (761 aa).

In terms of domain architecture, PHTF spans arginine 6–isoleucine 150. 3 helical membrane passes run glycine 77–leucine 97, isoleucine 99–leucine 119, and proline 121–valine 141. The disordered stretch occupies residues arginine 152 to lysine 184. The span at asparagine 170–serine 181 shows a compositional bias: low complexity. Residues asparagine 179 and asparagine 224 are each glycosylated (N-linked (GlcNAc...) asparagine). Serine 272, serine 276, serine 277, serine 333, and serine 335 each carry phosphoserine. Residues valine 345 to aspartate 414 form a disordered region. Residues serine 347–leucine 363 show a composition bias toward low complexity. Residue asparagine 362 is glycosylated (N-linked (GlcNAc...) asparagine). The span at serine 364–serine 375 shows a compositional bias: basic and acidic residues. Residue asparagine 430 is glycosylated (N-linked (GlcNAc...) asparagine). 4 helical membrane-spanning segments follow: residues glycine 472–leucine 492, threonine 514–isoleucine 534, valine 610–valine 630, and tryptophan 644–glycine 664. Residues asparagine 673 and asparagine 732 are each glycosylated (N-linked (GlcNAc...) asparagine). The helical transmembrane segment at valine 736–leucine 756 threads the bilayer.

In terms of assembly, interacts with FEM1B. As to expression, widely expressed with highest levels in testis.

It is found in the endoplasmic reticulum membrane. It localises to the golgi apparatus. The protein resides in the cis-Golgi network membrane. This is Protein PHTF1 from Mus musculus (Mouse).